Here is a 147-residue protein sequence, read N- to C-terminus: Nucleoside diphosphate kinase (147 aa).

Lys-9, Phe-57, Arg-85, Thr-91, Arg-102, and Asn-112 together coordinate ATP. His-115 (pros-phosphohistidine intermediate) is an active-site residue.

The protein belongs to the NDK family. Homotetramer. Mg(2+) serves as cofactor.

The protein resides in the cytoplasm. It carries out the reaction a 2'-deoxyribonucleoside 5'-diphosphate + ATP = a 2'-deoxyribonucleoside 5'-triphosphate + ADP. It catalyses the reaction a ribonucleoside 5'-diphosphate + ATP = a ribonucleoside 5'-triphosphate + ADP. Its function is as follows. Major role in the synthesis of nucleoside triphosphates other than ATP. The ATP gamma phosphate is transferred to the NDP beta phosphate via a ping-pong mechanism, using a phosphorylated active-site intermediate. In Thermosipho melanesiensis (strain DSM 12029 / CIP 104789 / BI429), this protein is Nucleoside diphosphate kinase.